Here is a 541-residue protein sequence, read N- to C-terminus: Chaperonin GroEL (541 aa).

ATP contacts are provided by residues 29 to 32 (TIGP), 86 to 90 (DGTTT), Gly413, 478 to 480 (NAA), and Asp494.

The protein belongs to the chaperonin (HSP60) family. In terms of assembly, forms a cylinder of 14 subunits composed of two heptameric rings stacked back-to-back. Interacts with the co-chaperonin GroES.

The protein resides in the cytoplasm. The catalysed reaction is ATP + H2O + a folded polypeptide = ADP + phosphate + an unfolded polypeptide.. Functionally, together with its co-chaperonin GroES, plays an essential role in assisting protein folding. The GroEL-GroES system forms a nano-cage that allows encapsulation of the non-native substrate proteins and provides a physical environment optimized to promote and accelerate protein folding. The chain is Chaperonin GroEL from Oenococcus oeni (strain ATCC BAA-331 / PSU-1).